The primary structure comprises 411 residues: Imidazolonepropionase (411 aa).

His-75 and His-77 together coordinate Fe(3+). Zn(2+) contacts are provided by His-75 and His-77. 4-imidazolone-5-propanoate contacts are provided by Arg-84, Tyr-147, and His-180. Position 147 (Tyr-147) interacts with N-formimidoyl-L-glutamate. His-245 provides a ligand contact to Fe(3+). Position 245 (His-245) interacts with Zn(2+). Gln-248 is a 4-imidazolone-5-propanoate binding site. A Fe(3+)-binding site is contributed by Asp-320. Position 320 (Asp-320) interacts with Zn(2+). Residues Asn-322 and Gly-324 each contribute to the N-formimidoyl-L-glutamate site. Thr-325 provides a ligand contact to 4-imidazolone-5-propanoate.

Belongs to the metallo-dependent hydrolases superfamily. HutI family. The cofactor is Zn(2+). Requires Fe(3+) as cofactor.

The protein resides in the cytoplasm. The catalysed reaction is 4-imidazolone-5-propanoate + H2O = N-formimidoyl-L-glutamate. The protein operates within amino-acid degradation; L-histidine degradation into L-glutamate; N-formimidoyl-L-glutamate from L-histidine: step 3/3. In terms of biological role, catalyzes the hydrolytic cleavage of the carbon-nitrogen bond in imidazolone-5-propanoate to yield N-formimidoyl-L-glutamate. It is the third step in the universal histidine degradation pathway. The protein is Imidazolonepropionase of Photobacterium profundum (strain SS9).